The primary structure comprises 134 residues: RxLR effector protein Avh238 (134 aa).

Residues 1–21 form the signal peptide; that stretch reads MRGVFFVAVAVAIFARSSAEA. The RxLR-dEER motif lies at 44 to 68; it reads RFLRVADSEDDDLAAPADDGKTEER. The disordered stretch occupies residues 50-72; it reads DSEDDDLAAPADDGKTEERAPKF. A compositionally biased stretch (basic and acidic residues) spans 61 to 70; it reads DDGKTEERAP.

It belongs to the RxLR effector family.

The protein resides in the secreted. Its subcellular location is the host cytoplasm. It is found in the host nucleus. Functionally, effector that, due to the lack of a histidine residue at position 79, is not able to induce cell death in tomato, tobacco, eggplant, potato, or in A.thaliana. The protein is RxLR effector protein Avh238 of Phytophthora sojae (Soybean stem and root rot agent).